The sequence spans 246 residues: Ribonuclease 3 (246 aa).

One can recognise an RNase III domain in the interval A16–G146. E59 lines the Mg(2+) pocket. D63 is an active-site residue. 2 residues coordinate Mg(2+): N132 and E135. Residue E135 is part of the active site. The 70-residue stretch at D173–A242 folds into the DRBM domain.

The protein belongs to the ribonuclease III family. As to quaternary structure, homodimer. Requires Mg(2+) as cofactor.

It localises to the cytoplasm. It catalyses the reaction Endonucleolytic cleavage to 5'-phosphomonoester.. In terms of biological role, digests double-stranded RNA. Involved in the processing of primary rRNA transcript to yield the immediate precursors to the large and small rRNAs (23S and 16S). Processes some mRNAs, and tRNAs when they are encoded in the rRNA operon. Processes pre-crRNA and tracrRNA of type II CRISPR loci if present in the organism. The chain is Ribonuclease 3 from Geobacter metallireducens (strain ATCC 53774 / DSM 7210 / GS-15).